Reading from the N-terminus, the 717-residue chain is Adhesion cell surface protein MAD1 (717 aa).

An N-terminal signal peptide occupies residues 1-19; that stretch reads MKSALSVVVAAAGVQQASA. 2 stretches are compositionally biased toward low complexity: residues 237-254 and 262-274; these read TPVT…QTTT and SKET…QTTP. Disordered stretches follow at residues 237–392 and 451–506; these read TPVT…ATTT and RTQS…TPPC. 8 consecutive repeat copies span residues 275–286, 287–298, 299–310, 311–328, 329–340, 341–352, 353–364, and 365–376. Polar residues predominate over residues 275-366; sequence GKETTPAQQT…TPAQQTTPGK (92 aa). Composition is skewed to low complexity over residues 368 to 392 and 484 to 503; these read TTPA…ATTT and QPTG…STQT. Positions 481 to 595 constitute a CFEM domain; that stretch reads TPEQPTGEKP…TQIITVTGTP (115 aa). Cystine bridges form between cysteine 513/cysteine 546, cysteine 524/cysteine 532, and cysteine 534/cysteine 568. Aspartate 529 is a heme binding site. The N-linked (GlcNAc...) asparagine glycan is linked to asparagine 614. The segment at 632–690 is disordered; it reads PTPTGGVPNQPPATASVPAGQNPPPVTGQNPPPAVTDQSPPPAITTGTGGVIPPKPTGS. Residues 652–674 are compositionally biased toward pro residues; it reads QNPPPVTGQNPPPAVTDQSPPPA. Alanine 695 carries GPI-anchor amidated alanine lipidation. Residues 696-717 constitute a propeptide, removed in mature form; that stretch reads GSGRVGAGLGMVLAVAAFVAAL.

Belongs to the RBT5 family. Post-translationally, the GPI-anchor is attached to the protein in the endoplasmic reticulum and serves to target the protein to the cell surface. There, the glucosamine-inositol phospholipid moiety is cleaved off and the GPI-modified mannoprotein is covalently attached via its lipidless GPI glycan remnant to the 1,6-beta-glucan of the outer cell wall layer.

It localises to the secreted. The protein resides in the cell wall. It is found in the cell membrane. Its function is as follows. Cell surface adhesion protein that plays a key role in virulence by allowing adherence to the insect host surface. Required to orientate the cytoskeleton and stimulate the expression of genes involved in the cell cycle. Is also involved in achieving the septin hourglass shape and subsequent separation of cells. The polypeptide is Adhesion cell surface protein MAD1 (Metarhizium anisopliae (Entomophthora anisopliae)).